We begin with the raw amino-acid sequence, 1827 residues long: Chromodomain-helicase-DNA-binding protein 2 (1827 aa).

Residues Met1–Ser14 are compositionally biased toward basic and acidic residues. A disordered region spans residues Met1–Glu264. Residues Leu15–Ser75 show a composition bias toward low complexity. Composition is skewed to basic and acidic residues over residues Glu81–Glu101, Ser115–Ala128, and Lys146–Pro155. The segment covering Gly175 to Lys204 has biased composition (basic residues). Phosphoserine is present on residues Ser207 and Ser208. Positions Glu234–Asp258 are enriched in acidic residues. Thr240 bears the Phosphothreonine mark. Ser242 carries the post-translational modification Phosphoserine. Chromo domains lie at Glu261–Gly353 and Gln378–Arg456. The Helicase ATP-binding domain occupies Ala496 to Glu666. Residue Asp509–Thr516 coordinates ATP. The short motif at Asp617–His620 is the DEAH box element. In terms of domain architecture, Helicase C-terminal spans Leu795–Thr946. 4 disordered regions span residues Glu1030 to Arg1124, Gly1329 to Asp1465, His1556 to Gly1638, and His1679 to Thr1827. The span at Glu1037–Glu1065 shows a compositional bias: basic and acidic residues. Residues Ser1085, Ser1087, Ser1365, and Ser1386 each carry the phosphoserine modification. Basic and acidic residues predominate over residues Lys1347–Asn1371. Basic and acidic residues-rich tracts occupy residues Glu1396–Asp1431 and Glu1565–Gly1574. A CHD1 helical C-terminal domain (CHCT) region spans residues Leu1464–Gln1566. Positions Ser1584 to Leu1601 are enriched in polar residues. Basic and acidic residues-rich tracts occupy residues Arg1697 to His1719, Gln1738 to Pro1748, Asp1759 to Glu1771, and Ser1794 to Glu1813. Position 1806 is a phosphoserine (Ser1806).

Interacts with MYOD1. Interacts with histone H3.3. Widely expressed.

The protein localises to the nucleus. The enzyme catalyses ATP + H2O = ADP + phosphate + H(+). ATP-dependent chromatin-remodeling factor that specifically binds to the promoter of target genes, leading to chromatin remodeling, possibly by promoting deposition of histone H3.3. Involved in myogenesis via interaction with MYOD1: binds to myogenic gene regulatory sequences and mediates incorporation of histone H3.3 prior to the onset of myogenic gene expression, promoting their expression. The protein is Chromodomain-helicase-DNA-binding protein 2 (Chd2) of Mus musculus (Mouse).